We begin with the raw amino-acid sequence, 2618 residues long: Mediator of RNA polymerase II transcription subunit 13 (2618 aa).

Low complexity-rich tracts occupy residues 232–255, 509–519, and 532–543; these read FAAASSPPGSNGSAASAGGAVPNP, TPASGTGSLSA, and DSKQLVQQQIQQ. 10 disordered regions span residues 232–279, 509–543, 569–731, 916–957, 970–995, 1036–1055, 1268–1384, 1521–1557, 1614–1633, and 1985–2060; these read FAAA…AAPP, TPASGTGSLSADGDENEQNKPPQDSKQLVQQQIQQ, GNTP…SGGP, LNIK…AEGL, TSSNDECSSVQIHTPPDSNNPSNGGC, TKMFPTPPSHEQQHPNSSPC, PRTP…TGVV, ASASMPGAGSGHGHGPNGGSNSSSCTPPSSNPHITGY, SRKNQNKQGPGETSSALDKI, and KTLL…GETK. A phosphothreonine mark is found at Thr571 and Thr575. Polar residues-rich tracts occupy residues 581–590, 634–643, and 669–681; these read STYSRNSLGG, APTSVSNLQQ, and SITASPYVHQTPS. A compositionally biased stretch (gly residues) spans 692–706; it reads AGGGPAGGQGLGTGP. The span at 711–723 shows a compositional bias: low complexity; it reads AQQPATPTAATSA. Gly residues predominate over residues 939–949; sequence NSSGGGSGSGG. Polar residues predominate over residues 1272–1295; the sequence is LTPSTVPQPLSSGGSQYLLNQLNC. Composition is skewed to gly residues over residues 1375 to 1384 and 1528 to 1538; these read GLGGGATGVV and AGSGHGHGPNG. Residues 1539–1553 show a composition bias toward low complexity; the sequence is GSNSSSCTPPSSNPH. Residues 1614–1629 show a composition bias toward polar residues; the sequence is SRKNQNKQGPGETSSA. Residues 1993-2014 show a composition bias toward low complexity; the sequence is GSGNSHSKGGSSCSSNSSSVSG. Residues Ser2472 and Ser2475 each carry the phosphoserine modification.

This sequence belongs to the Mediator complex subunit 13 family. Component of the Cdk8 module of the Mediator complex, composed of CycC, Cdk8, kto and skd.

It localises to the nucleus. In terms of biological role, component of the Mediator complex, a coactivator involved in the regulated transcription of nearly all RNA polymerase II-dependent genes. Mediator functions as a bridge to convey information from gene-specific regulatory proteins to the basal RNA polymerase II transcription machinery. Mediator is recruited to promoters by direct interactions with regulatory proteins and serves as a scaffold for the assembly of a functional preinitiation complex with RNA polymerase II and the general transcription factors. Required for leg and eye development and macrochaete specification or differentiation. Negatively regulates sex comb development. Required for activated transcription of the MtnB and MtnD genes. In Drosophila melanogaster (Fruit fly), this protein is Mediator of RNA polymerase II transcription subunit 13 (skd).